A 239-amino-acid polypeptide reads, in one-letter code: Tetraspanin-9 (239 aa).

Topologically, residues 1-12 are cytoplasmic; the sequence is MARGCLCCVKYM. Residues 13 to 33 traverse the membrane as a helical segment; sequence LFLFNLLFWLGGCGLLGVGVW. Residues 34-55 lie on the Extracellular side of the membrane; sequence LSVSQGSFATLSPSFPSISAAN. A helical transmembrane segment spans residues 56 to 76; sequence LIITLGAVIMVTGFLGCLGAI. At 77-85 the chain is on the cytoplasmic side; sequence KENKCLLLS. A helical membrane pass occupies residues 86-106; that stretch reads FFITLLVILLAELILLILFFV. Topologically, residues 107–203 are extracellular; it reads YTDNVSENAR…VEEWLDDNKH (97 aa). 2 N-linked (GlcNAc...) asparagine glycosylation sites follow: Asn-110 and Asn-180. The helical transmembrane segment at 204–224 threads the bilayer; the sequence is LLGTIAMCVLVIQLLGMAFSM. The Cytoplasmic portion of the chain corresponds to 225-239; that stretch reads TLYQQIHRSGKKYEA.

Belongs to the tetraspanin (TM4SF) family.

The protein localises to the membrane. The polypeptide is Tetraspanin-9 (tspan9) (Salmo salar (Atlantic salmon)).